The chain runs to 86 residues: Exodeoxyribonuclease 7 small subunit (86 aa).

The segment at 1 to 26 (MQDELFETEKAPQKNTKNAKNAPKKS) is disordered.

It belongs to the XseB family. Heterooligomer composed of large and small subunits.

Its subcellular location is the cytoplasm. The catalysed reaction is Exonucleolytic cleavage in either 5'- to 3'- or 3'- to 5'-direction to yield nucleoside 5'-phosphates.. Bidirectionally degrades single-stranded DNA into large acid-insoluble oligonucleotides, which are then degraded further into small acid-soluble oligonucleotides. The polypeptide is Exodeoxyribonuclease 7 small subunit (Helicobacter pylori (strain HPAG1)).